Here is a 337-residue protein sequence, read N- to C-terminus: Eukaryotic translation initiation factor 3 subunit H (337 aa).

In terms of domain architecture, MPN spans 21 to 153 (VQCDGLAVMK…LKAYRLTPQA (133 aa)).

Belongs to the eIF-3 subunit H family. As to quaternary structure, component of the eukaryotic translation initiation factor 3 (eIF-3) complex. The eIF-3 complex interacts with pix. Interacts with mxt.

Its subcellular location is the cytoplasm. Component of the eukaryotic translation initiation factor 3 (eIF-3) complex, which is involved in protein synthesis of a specialized repertoire of mRNAs and, together with other initiation factors, stimulates binding of mRNA and methionyl-tRNAi to the 40S ribosome. The eIF-3 complex specifically targets and initiates translation of a subset of mRNAs involved in cell proliferation. This chain is Eukaryotic translation initiation factor 3 subunit H, found in Drosophila willistoni (Fruit fly).